A 307-amino-acid polypeptide reads, in one-letter code: tRNA dimethylallyltransferase (307 aa).

Residue 5 to 12 (GPTGTGKS) participates in ATP binding. Substrate is bound at residue 7-12 (TGTGKS).

The protein belongs to the IPP transferase family. Monomer. Requires Mg(2+) as cofactor.

The catalysed reaction is adenosine(37) in tRNA + dimethylallyl diphosphate = N(6)-dimethylallyladenosine(37) in tRNA + diphosphate. In terms of biological role, catalyzes the transfer of a dimethylallyl group onto the adenine at position 37 in tRNAs that read codons beginning with uridine, leading to the formation of N6-(dimethylallyl)adenosine (i(6)A). The chain is tRNA dimethylallyltransferase from Mycobacterium avium (strain 104).